The sequence spans 142 residues: Large ribosomal subunit protein uL11 (142 aa).

This sequence belongs to the universal ribosomal protein uL11 family. Part of the ribosomal stalk of the 50S ribosomal subunit. Interacts with L10 and the large rRNA to form the base of the stalk. L10 forms an elongated spine to which L12 dimers bind in a sequential fashion forming a multimeric L10(L12)X complex. One or more lysine residues are methylated.

Its function is as follows. Forms part of the ribosomal stalk which helps the ribosome interact with GTP-bound translation factors. The chain is Large ribosomal subunit protein uL11 from Bradyrhizobium diazoefficiens (strain JCM 10833 / BCRC 13528 / IAM 13628 / NBRC 14792 / USDA 110).